We begin with the raw amino-acid sequence, 574 residues long: Septation ring formation regulator EzrA (574 aa).

Over 1 to 7 (MSSGIIL) the chain is Extracellular. Residues 8 to 26 (LLVAIVLLVIIAYVVGVVI) form a helical membrane-spanning segment. The Cytoplasmic portion of the chain corresponds to 27–574 (RKRNDTLIAN…YEKTQERIRF (548 aa)). 3 coiled-coil regions span residues 104-141 (VRAK…EEKN), 275-343 (LVSL…SAKY), and 473-525 (DIEA…VQKS).

This sequence belongs to the EzrA family.

The protein localises to the cell membrane. Functionally, negative regulator of FtsZ ring formation; modulates the frequency and position of FtsZ ring formation. Inhibits FtsZ ring formation at polar sites. Interacts either with FtsZ or with one of its binding partners to promote depolymerization. The polypeptide is Septation ring formation regulator EzrA (Streptococcus agalactiae serotype III (strain NEM316)).